Here is a 520-residue protein sequence, read N- to C-terminus: Cyclic AMP-responsive element-binding protein 3-like protein 2 (520 aa).

The Cytoplasmic segment spans residues 1–378; it reads MEVLESGEQG…CKLAGTQTGT (378 aa). At S93 the chain carries Phosphoserine. Residue K178 forms a Glycyl lysine isopeptide (Lys-Gly) (interchain with G-Cter in SUMO2) linkage. S191 carries the phosphoserine modification. Residues 195 to 264 are disordered; sequence APVDHLHLPP…PHKLQGSGPL (70 aa). 2 stretches are compositionally biased toward low complexity: residues 208-220 and 234-255; these read SSHGSDSEGSLSP and SPSRAAPRAPSALSSSPLLTAP. The 64-residue stretch at 294 to 357 folds into the bZIP domain; it reads ALKKIRRKIK…RTLLQQLQKL (64 aa). Positions 296–325 are basic motif; that stretch reads KKIRRKIKNKISAQESRRKKKEYMDSLEKK. Positions 336–357 are leucine-zipper; that stretch reads LRKKVEVLENTNRTLLQQLQKL. A helical; Signal-anchor for type II membrane protein membrane pass occupies residues 379-399; the sequence is CLMVVVLCFAVAFGSFFQGYG. Over 400-520 the chain is Lumenal; the sequence is PYPSATKMAL…ELDRRVNTTF (121 aa). The short motif at 427-430 is the S1P recognition element; sequence RNLL. 3 N-linked (GlcNAc...) asparagine glycosylation sites follow: N480, N504, and N517.

It belongs to the bZIP family. ATF subfamily. In terms of assembly, binds DNA as a dimer. Upon ER stress, translocated to the Golgi apparatus, where it is processed by regulated intramembrane proteolysis (RIP) to release the cytosol-facing N-terminal transcription factor domain. The cleavage is performed sequentially by site-1 and site-2 proteases (S1P/MBTPS1 and S2P/MBTPS2). In terms of processing, N-glycosylated. Post-translationally, ubiquitinated by HRD1/SYVN1; undergoes 'Lys-48'-linked ubiquitination, followed by rapid proteasomal degradation under normal conditions. Upon ER stress, SYVN1 E3 ubiquitin-protein ligase dissociates from its substrate, ubiquitination does not occur and CREB3L2 is stabilized.

It localises to the endoplasmic reticulum membrane. It is found in the nucleus. Its function is as follows. Transcription factor involved in unfolded protein response (UPR). In the absence of endoplasmic reticulum (ER) stress, inserted into ER membranes, with N-terminal DNA-binding and transcription activation domains oriented toward the cytosolic face of the membrane. In response to ER stress, transported to the Golgi, where it is cleaved in a site-specific manner by resident proteases S1P/MBTPS1 and S2P/MBTPS2. The released N-terminal cytosolic domain is translocated to the nucleus to effect transcription of specific target genes. Plays a critical role in chondrogenesis by activating the transcription of SEC23A, which promotes the transport and secretion of cartilage matrix proteins, and possibly that of ER biogenesis-related genes. In a neuroblastoma cell line, protects cells from ER stress-induced death. In vitro activates transcription of target genes via direct binding to the CRE site. In Pongo abelii (Sumatran orangutan), this protein is Cyclic AMP-responsive element-binding protein 3-like protein 2 (CREB3L2).